The chain runs to 463 residues: NADH dehydrogenase [ubiquinone] iron-sulfur protein 2, mitochondrial (463 aa).

A mitochondrion-targeting transit peptide spans methionine 1–glycine 33. Lysine 62 carries the N6-acetyllysine modification. Arginine 118 carries the post-translational modification Symmetric dimethylarginine. [4Fe-4S] cluster contacts are provided by cysteine 326, cysteine 332, and cysteine 347.

The protein belongs to the complex I 49 kDa subunit family. As to quaternary structure, core subunit of respiratory chain NADH dehydrogenase (Complex I) which is composed of 45 different subunits. Component of the iron-sulfur (IP) fragment of the enzyme. Interacts with NDUFAF3. Interacts with NDUFAF7. Interacts with CERS2. Requires [4Fe-4S] cluster as cofactor. In terms of processing, dimethylation at Arg-118 by NDUFAF7 takes place after NDUFS2 assembles into the complex I, leading to stabilize the early intermediate complex.

Its subcellular location is the mitochondrion inner membrane. It carries out the reaction a ubiquinone + NADH + 5 H(+)(in) = a ubiquinol + NAD(+) + 4 H(+)(out). Its function is as follows. Core subunit of the mitochondrial membrane respiratory chain NADH dehydrogenase (Complex I) which catalyzes electron transfer from NADH through the respiratory chain, using ubiquinone as an electron acceptor. Essential for the catalytic activity and assembly of complex I. Redox-sensitive, critical component of the oxygen-sensing pathway in the pulmonary vasculature which plays a key role in acute pulmonary oxygen-sensing and hypoxic pulmonary vasoconstriction. Plays an important role in carotid body sensing of hypoxia. Essential for glia-like neural stem and progenitor cell proliferation, differentiation and subsequent oligodendrocyte or neuronal maturation. In Pan troglodytes (Chimpanzee), this protein is NADH dehydrogenase [ubiquinone] iron-sulfur protein 2, mitochondrial (NDUFS2).